The sequence spans 91 residues: MARSIKKGPFVDLHLLKKVDAARSSNDKRPIKTWSRRSTILPDFVGMTIAVHNGRTHVPVYVTENMVGHKLGEFSLTRTFKGHAADKKAKR.

This sequence belongs to the universal ribosomal protein uS19 family.

Protein S19 forms a complex with S13 that binds strongly to the 16S ribosomal RNA. The protein is Small ribosomal subunit protein uS19 of Laribacter hongkongensis (strain HLHK9).